Here is a 356-residue protein sequence, read N- to C-terminus: Arginine kinase (356 aa).

A Phosphagen kinase N-terminal domain is found at 9–91; sequence KLEAGFQKLQ…FDPIIEDYHI (83 aa). Position 64–68 (64–68) interacts with L-arginine; it reads GVGIY. Residues 119-356 enclose the Phosphagen kinase C-terminal domain; sequence FVISTRVRCG…AELIKLEQSA (238 aa). ATP-binding positions include 122–126 and histidine 185; that span reads STRVR. Glutamate 225 is a binding site for L-arginine. Residue arginine 229 coordinates ATP. An L-arginine-binding site is contributed by cysteine 271. ATP contacts are provided by residues 280-284 and 309-314; these read RASVH and RGTRGE. Glutamate 314 is a binding site for L-arginine.

Belongs to the ATP:guanido phosphotransferase family.

The catalysed reaction is L-arginine + ATP = N(omega)-phospho-L-arginine + ADP + H(+). In Artemia franciscana (Brine shrimp), this protein is Arginine kinase (ARGK).